We begin with the raw amino-acid sequence, 502 residues long: 2-isopropylmalate synthase (502 aa).

4 residues coordinate Mn(2+): Asp1, His189, His191, and Asn225. The Pyruvate carboxyltransferase domain maps to 1-254 (DGEQALQASL…STNINYKEIY (254 aa)). The tract at residues 379-502 (CLKFFSVQSI…VNKKLQELKK (124 aa)) is regulatory domain.

It belongs to the alpha-IPM synthase/homocitrate synthase family. LeuA type 1 subfamily. As to quaternary structure, homodimer. Mn(2+) serves as cofactor.

The protein localises to the cytoplasm. It carries out the reaction 3-methyl-2-oxobutanoate + acetyl-CoA + H2O = (2S)-2-isopropylmalate + CoA + H(+). It functions in the pathway amino-acid biosynthesis; L-leucine biosynthesis; L-leucine from 3-methyl-2-oxobutanoate: step 1/4. Its function is as follows. Catalyzes the condensation of the acetyl group of acetyl-CoA with 3-methyl-2-oxobutanoate (2-ketoisovalerate) to form 3-carboxy-3-hydroxy-4-methylpentanoate (2-isopropylmalate). The polypeptide is 2-isopropylmalate synthase (Buchnera aphidicola subsp. Macrosiphoniella ludovicianae).